A 99-amino-acid polypeptide reads, in one-letter code: A-type ATP synthase subunit F (99 aa).

It belongs to the V-ATPase F subunit family. As to quaternary structure, has multiple subunits with at least A(3), B(3), C, D, E, F, H, I and proteolipid K(x).

The protein localises to the cell membrane. Component of the A-type ATP synthase that produces ATP from ADP in the presence of a proton gradient across the membrane. The chain is A-type ATP synthase subunit F from Methanococcus maripaludis (strain C7 / ATCC BAA-1331).